The chain runs to 331 residues: UDP-GalNAc:beta-1,3-N-acetylgalactosaminyltransferase 1 (331 aa).

The Cytoplasmic portion of the chain corresponds to 1–20 (MAPALPITLPSKMSLRSLKW). Residues 21–43 (SLLLLSLLSFLVMWYLSLPHYNV) form a helical; Signal-anchor for type II membrane protein membrane-spanning segment. Residues 44–331 (IERVNWMYFY…VMLRNTTCHY (288 aa)) are Lumenal-facing. Residues Asn-72, Asn-154, Asn-198, Asn-212, and Asn-326 are each glycosylated (N-linked (GlcNAc...) asparagine).

Belongs to the glycosyltransferase 31 family. It depends on Mg(2+) as a cofactor.

It localises to the golgi apparatus membrane. The enzyme catalyses a globoside Gb3Cer (d18:1(4E)) + UDP-N-acetyl-alpha-D-galactosamine = a globoside Gb4Cer (d18:1(4E)) + UDP + H(+). It participates in protein modification; protein glycosylation. Functionally, transfers N-acetylgalactosamine onto globotriaosylceramide. Plays a critical role in preimplantation stage embryonic development. The protein is UDP-GalNAc:beta-1,3-N-acetylgalactosaminyltransferase 1 (B3GALNT1) of Sus scrofa (Pig).